The primary structure comprises 1580 residues: Adhesion G protein-coupled receptor L3 (1580 aa).

Residues 1–19 (MWPSQLLVFMMLLAPIIHG) form the signal peptide. The Extracellular segment spans residues 20-949 (GKHSERHPAL…VHDLLLDVIT (930 aa)). A disordered region spans residues 23–81 (SERHPALASPLRHAERGPGGALPPRHLLQQPAAERATAHRGPGPRGATRGVRGPGAHGA). Residues 103 to 192 (SCESYPIELR…KYLEVQYECV (90 aa)) form the SUEL-type lectin domain. 5 cysteine pairs are disulfide-bonded: Cys104-Cys134, Cys113-Cys191, Cys146-Cys178, Cys159-Cys165, and Cys203-Cys385. Asn161 is a glycosylation site (N-linked (GlcNAc...) asparagine). The region spanning 202 to 461 (LCPGLLKGVY…VVKYSLDFGP (260 aa)) is the Olfactomedin-like domain. Residues 317 to 347 (YHDTSPYRWGGKSDIDLAVDENGLWVIYATE) are interaction with FLRT3. Ca(2+)-binding residues include Asp332, Asn380, Ala381, and Val435. A disordered region spans residues 494–540 (EISTTGPLGTGSTTTSTTLRTTTWSPGRSTTPSVSGRRNRSTSTPSP). Over residues 496-521 (STTGPLGTGSTTTSTTLRTTTWSPGR) the composition is skewed to low complexity. The segment covering 522–539 (STTPSVSGRRNRSTSTPS) has biased composition (polar residues). Residues Asn532, Asn617, Asn827, Asn840, Asn885, and Asn911 are each glycosylated (N-linked (GlcNAc...) asparagine). The GAIN-B domain occupies 756–935 (DIVRENTDNI…AVLMAHVEVK (180 aa)). Cystine bridges form between Cys886–Cys917 and Cys905–Cys919. The segment at 886-935 (CSFWSYSKRTMTGYWSTQGCRLLTTNKTHTTCSCNHLTNFAVLMAHVEVK) is GPS. Residues 923–939 (TNFAVLMAHVEVKHSDA) are stachel. Residues 950-970 (WVGILLSLVCLLICIFTFCFF) form a helical membrane-spanning segment. Residues 971 to 978 (RGLQSDRN) lie on the Cytoplasmic side of the membrane. The helical transmembrane segment at 979–999 (TIHKNLCISLFVAELLFLIGI) threads the bilayer. N-linked (GlcNAc...) asparagine glycosylation is present at Asn1000. The Extracellular portion of the chain corresponds to 1000–1007 (NRTDQPIA). The chain crosses the membrane as a helical span at residues 1008-1028 (CAVFAALLHFFFLAAFTWMFL). The Cytoplasmic segment spans residues 1029–1050 (EGVQLYIMLVEVFESEHSRRKY). A helical transmembrane segment spans residues 1051 to 1071 (FYLVGYGMPALIVAVSAAVDY). Over 1072–1088 (RSYGTDKVCWLRLDTYF) the chain is Extracellular. The chain crosses the membrane as a helical span at residues 1089-1109 (IWSFIGPATLIIMLNVIFLGI). Residues 1110–1142 (ALYKMFHHTAILKPESGCLDNINYEDNRPFIKS) lie on the Cytoplasmic side of the membrane. Residues 1143-1163 (WVIGAIALLCLLGLTWAFGLM) form a helical membrane-spanning segment. Topologically, residues 1164-1169 (YINEST) are extracellular. Asn1166 carries an N-linked (GlcNAc...) asparagine glycan. Residues 1170–1190 (VIMAYLFTIFNSLQGMFIFIF) traverse the membrane as a helical segment. The Cytoplasmic segment spans residues 1191-1580 (HCVLQKKVRK…KGPAHLVTSL (390 aa)). A disordered region spans residues 1213–1238 (GRSTESSIGSGKTSGSRTPGRYSTGS). Ser1254 carries the phosphoserine modification. The disordered stretch occupies residues 1555–1580 (FIVPPNKDGTPPEGSSKGPAHLVTSL). Residues 1575 to 1580 (HLVTSL) carry the PDZ-binding motif.

This sequence belongs to the G-protein coupled receptor 2 family. LN-TM7 subfamily. In terms of assembly, heterodimer of 2 chains generated by proteolytic processing; the large extracellular N-terminal fragment and the membrane-bound C-terminal fragment predominantly remain associated and non-covalently linked. Interacts (via olfactomedin-like domain) with FLRT1 (via extracellular domain). Interacts (via olfactomedin-like domain) with FLRT2 (via extracellular domain). Interacts (via olfactomedin-like domain) with FLRT3 (via extracellular domain); the interaction is direct. Interacts (via extracellular domain) with TENM1. Interacts (via extracellular domain) with TENM2. Interacts (via extracellular domain) with TENM3. Identified in a complex with FLRT3 and UNC5B; does not interact with UNC5B by itself. Identified in a complex with FLRT3 and UNC5D; does not interact with UNC5D by itself. Interacts (via PDZ-binding motif) with SHANK3. Interacts (via PDZ-binding motif) with DLG4. In terms of processing, autoproteolytically processed at the GPS region of the GAIN-B domain; this cleavage modulates receptor activity. In terms of tissue distribution, brain-specific distribution but low levels are also detected in lung and spleen.

Its subcellular location is the cell membrane. It localises to the postsynaptic cell membrane. The protein resides in the cell projection. It is found in the axon. The protein localises to the cell junction. Its activity is regulated as follows. Forms a heterodimer of 2 chains generated by proteolytic processing that remain associated through non-covalent interactions mediated by the GAIN-B domain. In the inactivated receptor, the Stachel sequence (also named stalk) is embedded in the GAIN-B domain, where it adopts a beta-strand conformation. On activation, the Stachel moves into the 7 transmembrane region and adopts a twisted hook-shaped configuration that forms contacts within the receptor, leading to coupling of a G-alpha protein, which activates signaling. The cleaved GAIN-B and N-terminal domains can then dissociate from the rest of the receptor. Its function is as follows. Orphan adhesion G-protein coupled receptor (aGPCR), which mediates synapse specificity. Ligand binding causes a conformation change that triggers signaling via guanine nucleotide-binding proteins (G proteins) and modulates the activity of downstream effectors. ADGRL3 is coupled with different classes of G alpha proteins, such as G(12)/G(13), G(s), G(i) or G(q), depending on the context. Coupling to G(12)/G(13) G proteins, which mediates the activation Rho small GTPases is the most efficient. Following G-protein coupled receptor activation, associates with cell adhesion molecules that are expressed at the surface of adjacent cells to direct synapse specificity. Specifically mediates the establishment of Schaffer-collateral synapses formed by CA3-region axons on CA1-region pyramidal neurons in the hippocampus. Localizes to postsynaptic spines in excitatory synapses in the S.oriens and S.radiatum and interacts with presynaptic cell adhesion molecules FLRT3 and TENM2, promoting synapse formation. Plays a role in the development of glutamatergic synapses in the cortex. Important in determining the connectivity rates between the principal neurons in the cortex. Orphan adhesion G-protein coupled receptor (aGPCR), which mediates synapse specificity. Ligand binding causes a conformation change that triggers signaling via guanine nucleotide-binding proteins (G proteins) and modulates the activity of downstream effectors, such as adenylate cyclase. Isoform 1 is specifically coupled to G(s) G proteins and mediates activation of adenylate cyclase activity. Following G-protein coupled receptor activation, undergoes liquid-liquid phase transition, associates with (1) cell adhesion molecules that are expressed at the surface of adjacent cells, as well as (2) PDZ-containing proteins, such as SHANK3 and DLG4, in the cytoplasm to direct synapse formation. This is Adhesion G protein-coupled receptor L3 from Bos taurus (Bovine).